The primary structure comprises 371 residues: Queuine tRNA-ribosyltransferase (371 aa).

Asp89 acts as the Proton acceptor in catalysis. Substrate contacts are provided by residues 89–93, Asp143, Gln185, and Gly212; that span reads DSGGF. Positions 243 to 249 are RNA binding; that stretch reads GVGTPED. Catalysis depends on Asp262, which acts as the Nucleophile. Residues 267-271 are RNA binding; important for wobble base 34 recognition; that stretch reads TRNAR. 4 residues coordinate Zn(2+): Cys300, Cys302, Cys305, and His331.

This sequence belongs to the queuine tRNA-ribosyltransferase family. Homodimer. Within each dimer, one monomer is responsible for RNA recognition and catalysis, while the other monomer binds to the replacement base PreQ1. It depends on Zn(2+) as a cofactor.

The catalysed reaction is 7-aminomethyl-7-carbaguanine + guanosine(34) in tRNA = 7-aminomethyl-7-carbaguanosine(34) in tRNA + guanine. It participates in tRNA modification; tRNA-queuosine biosynthesis. Functionally, catalyzes the base-exchange of a guanine (G) residue with the queuine precursor 7-aminomethyl-7-deazaguanine (PreQ1) at position 34 (anticodon wobble position) in tRNAs with GU(N) anticodons (tRNA-Asp, -Asn, -His and -Tyr). Catalysis occurs through a double-displacement mechanism. The nucleophile active site attacks the C1' of nucleotide 34 to detach the guanine base from the RNA, forming a covalent enzyme-RNA intermediate. The proton acceptor active site deprotonates the incoming PreQ1, allowing a nucleophilic attack on the C1' of the ribose to form the product. After dissociation, two additional enzymatic reactions on the tRNA convert PreQ1 to queuine (Q), resulting in the hypermodified nucleoside queuosine (7-(((4,5-cis-dihydroxy-2-cyclopenten-1-yl)amino)methyl)-7-deazaguanosine). In Nitrosomonas europaea (strain ATCC 19718 / CIP 103999 / KCTC 2705 / NBRC 14298), this protein is Queuine tRNA-ribosyltransferase.